A 2596-amino-acid chain; its full sequence is MSTKAEQFASKIRYLQEYHNRVLHNIYPVPSGTDIANTLKYFSQTLLSILSRTGKKENQDASNLTVPMTMCLFPVPFPLTPSLRPQVSSINPTVTRSLLYSVLRDAPSERGPQSRDAQLSDYPSLDYQGLYVTLVTLLDLVPLLQHGQHDLGQSIFYTTTCLLPFLNDDVLSTLPYTMISTLATFPPFLHKDIIEYLSTSFLPMAILGSSGREGVPAHVNLSASSMLMIAMQYTSNPVYHCQLLECLMKYKQEVWKDLLYVIAYGPSQVKPPAVQMLFHYWPNLKPPGAISEYRGLQYTAWNPIHCQHIECHNAINKPAVKMCIDPSLSVALGDKPPPLYLCEECSERISGDHSEWLIDVLLPQAEISAICQKKNCSSHVRRAVVTCFSAGCCGRHGNRPVRYCKRCHSNHHSNEVGATAETHLYQTSPPPINTRECGAEELVCAVEAVISLLKEAEFHAEQREHELNRRRQLGLSSSHHSLDNTDFDNKDDDKHDQRLLSQFGIWFLVSLCTPSENTPTESLARLVAMVFQWFHSTAYMMDDEVGSLVEKLKPQFVTKWLKTVCDVRFDVMVMCLLPKPMEFARVGGYWDKSCSTVTQLKEGLNRILCLIPYNVISQSVWECIMPEWLEAIRTEVPDNQLKEFREVLSKMFDIELCPLPFSMEEMFGFISCRFTGYPSTVQEQALLWLHVLSELDITVPLQLLISMFSDGVNSVKELANQRKSRANELAGNLASRRVSVASDPGRRGQHNTLSPFHSPFQSPFRSPMRSPFRSPFKNFGHPGGRTIDFDCEDDDMNLNCFILMFDLLLKQMELQDDGITMGLEHSLSKDIISIINNVFQAPWGGSHSCQKDKKATECNLCQSSILCYQLACELLERLAPKEESRLVEPTDSLEDSLLSSRPEFILGPEGEEEENPAAKHGENPGNRTVPSEHAAIKNDTERKFCYQQLPVTLRLIYTIFQEMAKFEEPDILFNMLNCLKILCLHGECLYTARKDHPQFLAYIQDHMLIASLWRVVKSEFSQLSSLAVPLLLHALSLPHGADIFWTIINGNFNSKDWKMRFEAVEKVAVICRFLDIHSVTKNHLLKYSLAHAFCCFLTAVEDVNPAVATRAGLLLDTIKRPALQGLCLCLDFQFDTVVKDRPTILSKLLLLHFLKQDIPALSWEFFVNRFETLSLEAQLHLDCNKEFPFPTTITAVRTNVANLSDAALWKIKRARFARNRQKSVRSLRDSVKGPAESKRALSLPETLTSKIRQQSPENDNTIKDLLPEDAGIDHQTVHQLITVLMKFMARDESSAESDISSAKAFNTVKRHLYVLLGYDQQEGCFMIAPQKMRLSTCFNAFIAGIAQVMDYNINLGKHLLPLVVQVLKYCSCPQLRHYFQQPPRCSLWSLKPHIRQMWLKALLVILYKYPYRDCDVSKTLLHLIHITVNTLNAQYHSCKPHATAGPLYTDNSNISRYSEKEKGEIELAEYRETGALQDSVLHCVREESIQKKKLRSLKQKSLDIGNADSLLFTLDEHRRKSCIDRCDIDKPPAQAAYISQRQNDHHGRSRQNSATRPDNTEIPKNPGTEGFQEIRRPVIPEVRLNCMETFEVRVDSPGKPAPREDLDLIDLSSDSTSGPEKHSILSTSDSDSLVFEPLPPLRIVESDEEEEMMNQGNGGALGNNAASSPSIPSQPSVLSLSTTPLVQVSVEDCSKDFSSKDSGNHQSASNEDSTIAALDDLTDSEELSKSEELREFASGSPLTLKQKRDLLQKSSAVPEMSVDYNPEPSPAEEKPGQTPTSGVKTVLLKVPEDGENLIESEKPNTSAESDTEQNPERKVEEDGAEESEFKIQIVPRQRKQRKIAVSAIQREYLDISFNILDKLGEQKDPDPSAKGLSTLEMPRESSSAPTLEAGAPETSSHSSISKQIQPGKRQCNVPMCLNPDLEGQPLRTRGATKSSLLSAPSIASMFVPAPEEFTEEQPTVMADKCHDCGAILEEYDEETLGLAIVVLSTFIHLSPDLAAPLLLDIMQSVGRLASSTTFSNQAESMMVPGNAAGVAKQFLRCIFHQLAPNGIFPQLFQSAIKDGTFLRTLATSLMDFNELSSIAALSQLLEGLNNKKNLPAGGAMIRCLENIATFMEALPMDSPSSLWTTISNQFQTFFAKLPCVLPLKCSLDSSLRIMICLLKIPSTNATRSLLEPFSKLLSFVIQNAVFTLAYLVELCGLCYRAFTKERDKFYLSRSVVLELLQALKLKSPLPDTNLLLLVQFICADAGTKLAESTILSKQMIASVPGCGTAAMECIRQYVSEVLEFMADMHTLTKLKSHMKTCSQPLHEDTFGGHLKVGLAQIAAMEISRGNHRDNKAVIRYLPWLYHPPSAMQQGPKEFIECVSHIRLLSWLLLGSLTHNAVCPNASSPCLPIPLDAGSHIADHLIVILIGFPEQSKTCVLHMCSLFHAFIFAQLWTVYCEQSAVATNVQNQNEFSFTAILTALEFWSRVTPSILQLMAHNKVMVEMVCLHVISLMEALQECNSTIFVKLIPMWLPMIQSNTKHLSAGLQLRLQAIQNNVNHHSLRTLPGSGQSSAGLAALRKWLQCTQFKMAQVEIQSSEAASQFYPL.

Phosphoserine occurs at positions 754 and 758. Disordered stretches follow at residues 907–931, 1539–1573, 1594–1632, 1648–1679, 1695–1832, and 1863–1909; these read GPEGEEEENPAAKHGENPGNRTVPS, SQRQNDHHGRSRQNSATRPDNTEIPKNPGTEGFQE, VDSPGKPAPREDLDLIDLSSDSTSGPEKHSILSTSDSDS, EEEEMMNQGNGGALGNNAASSPSIPSQPSVLS, KDFS…FKIQ, and LGEQ…KQIQ. Basic and acidic residues predominate over residues 1594-1606; sequence VDSPGKPAPREDL. Low complexity predominate over residues 1662–1679; sequence GNNAASSPSIPSQPSVLS. Positions 1704 to 1713 are enriched in polar residues; the sequence is NHQSASNEDS. The span at 1726–1735 shows a compositional bias: basic and acidic residues; sequence ELSKSEELRE. The segment covering 1897-1908 has biased composition (polar residues); it reads ETSSHSSISKQI. A run of 2 helical transmembrane segments spans residues 2184–2204 and 2426–2446; these read LLSFVIQNAVFTLAYLVELCG and CVLHMCSLFHAFIFAQLWTVY.

Belongs to the unc-79 family. NALCN complex consists of NALCN and auxiliary subunits, UNC79, UNC80 and NACL1. These auxiliary subunits are essential for the NALCN channel function. UNC80 bridges NALCN to UNC79. Interacts with NALCN. Interacts with UNC80.

It localises to the cell membrane. Auxiliary subunit of the NALCN sodium channel complex. The NALCN sodium channel complex is a voltage-gated ion channel responsible for the resting Na(+) permeability that controls neuronal excitability. Activated by neuropeptides substance P, neurotensin, and extracellular calcium that regulates neuronal excitability by controlling the sizes of NALCN-dependent sodium-leak current. This is Protein unc-79 homolog (Unc79) from Mus musculus (Mouse).